We begin with the raw amino-acid sequence, 299 residues long: Nicotinate-nucleotide pyrophosphorylase [carboxylating] (299 aa).

The important for hexamer formation stretch occupies residues 8–12; the sequence is FLLPP. Residues Arg-102, 138–139, 160–161, Lys-171, Glu-201, Asp-222, 248–250, and Gly-270 each bind quinolinate; these read RK, HR, and SGG.

It belongs to the NadC/ModD family. As to quaternary structure, hexamer formed by 3 homodimers.

It catalyses the reaction nicotinate beta-D-ribonucleotide + CO2 + diphosphate = quinolinate + 5-phospho-alpha-D-ribose 1-diphosphate + 2 H(+). It participates in cofactor biosynthesis; NAD(+) biosynthesis; nicotinate D-ribonucleotide from quinolinate: step 1/1. Functionally, involved in the catabolism of quinolinic acid (QA). This is Nicotinate-nucleotide pyrophosphorylase [carboxylating] (Qprt) from Rattus norvegicus (Rat).